The following is a 59-amino-acid chain: Large ribosomal subunit protein uL30 (59 aa).

The protein belongs to the universal ribosomal protein uL30 family. As to quaternary structure, part of the 50S ribosomal subunit.

The chain is Large ribosomal subunit protein uL30 from Buchnera aphidicola subsp. Acyrthosiphon kondoi (Acyrthosiphon kondoi symbiotic bacterium).